Consider the following 188-residue polypeptide: Elongation factor P (188 aa).

The residue at position 34 (lysine 34) is an N6-(3,6-diaminohexanoyl)-5-hydroxylysine.

It belongs to the elongation factor P family. In terms of processing, may be beta-lysylated on the epsilon-amino group of Lys-34 by the combined action of EpmA and EpmB, and then hydroxylated on the C5 position of the same residue by EpmC (if this protein is present). Lysylation is critical for the stimulatory effect of EF-P on peptide-bond formation. The lysylation moiety may extend toward the peptidyltransferase center and stabilize the terminal 3-CCA end of the tRNA. Hydroxylation of the C5 position on Lys-34 may allow additional potential stabilizing hydrogen-bond interactions with the P-tRNA.

The protein resides in the cytoplasm. Its pathway is protein biosynthesis; polypeptide chain elongation. In terms of biological role, involved in peptide bond synthesis. Alleviates ribosome stalling that occurs when 3 or more consecutive Pro residues or the sequence PPG is present in a protein, possibly by augmenting the peptidyl transferase activity of the ribosome. Modification of Lys-34 is required for alleviation. In Haemophilus influenzae (strain 86-028NP), this protein is Elongation factor P.